Here is a 514-residue protein sequence, read N- to C-terminus: Cytochrome bd-II ubiquinol oxidase subunit 1 (514 aa).

The Cytoplasmic portion of the chain corresponds to 1–22 (MWDVIDLSRWQFALTALYHFLF). His19 is a binding site for heme. Residues 23–42 (VPLTLGLIFLLAIMETIYVV) form a helical membrane-spanning segment. At 43-94 (TGKTIYRDMTRFWGKLFGINFALGVATGLTMEFQFGTNWSFYSNYVGDIFGA) the chain is on the periplasmic side. A helical membrane pass occupies residues 95–114 (PLAMEALMAFFLESTFVGLF). Topologically, residues 115–129 (FFGWQRLNKYQHLLV) are cytoplasmic. Residues 130 to 149 (TWLVAFGSNLSALWILNANG) traverse the membrane as a helical segment. Over 150-187 (WMQYPTGAHFDIDTLRMEMTSFSELVFNPVSQVKFVHT) the chain is Periplasmic. A heme-binding site is contributed by His186. Residues 188-207 (VMAGYVTGAMFIMAISAWYL) traverse the membrane as a helical segment. Over 208–219 (LRGRERNVALRS) the chain is Cytoplasmic. The helical transmembrane segment at 220-239 (FAIGSVFGTLAIIGTLQLGD) threads the bilayer. Residues 240-392 (SSAYEVAQVQ…VAPVFWSFRI (153 aa)) lie on the Periplasmic side of the membrane. Residue Met393 coordinates heme. The helical transmembrane segment at 393–412 (MVGCGSLLLLVMLIALVQTL) threads the bilayer. The Cytoplasmic portion of the chain corresponds to 413–470 (RGKIDQHRWVLKMALWSLPLPWIAIEAGWFMTEFGRQPWAIQDILPTYSAHSALTTGQ). Residues 471-490 (LAFSLIMIVGLYTLFLIAEV) form a helical membrane-spanning segment. Residues 491-514 (YLMQKYARLGPSAMQSEQPTQQQG) are Periplasmic-facing.

Belongs to the cytochrome ubiquinol oxidase subunit 1 family. As to quaternary structure, heterodimer of subunits I and II. Heme serves as cofactor. In terms of processing, the N-terminus is blocked.

The protein resides in the cell inner membrane. The enzyme catalyses 2 a ubiquinol + O2 + n H(+)(in) = 2 a ubiquinone + 2 H2O + n H(+)(out). It functions in the pathway energy metabolism; oxidative phosphorylation. Inhibited by cyanide; is more sensitive to cyanide than cytochrome bd-I oxidase. Its function is as follows. A terminal oxidase that catalyzes quinol-dependent, Na(+)-independent oxygen uptake. Prefers menadiol over other quinols although ubiquinol was not tested. Generates a proton motive force using protons and electrons from opposite sides of the membrane to generate H(2)O, transferring 1 proton/electron. This Escherichia coli (strain K12) protein is Cytochrome bd-II ubiquinol oxidase subunit 1 (appC).